A 476-amino-acid chain; its full sequence is ATP synthase subunit beta (476 aa).

154–161 contacts ATP; that stretch reads GGAGVGKT.

Belongs to the ATPase alpha/beta chains family. As to quaternary structure, F-type ATPases have 2 components, CF(1) - the catalytic core - and CF(0) - the membrane proton channel. CF(1) has five subunits: alpha(3), beta(3), gamma(1), delta(1), epsilon(1). CF(0) has four main subunits: a(1), b(1), b'(1) and c(9-12).

The protein resides in the cell inner membrane. The enzyme catalyses ATP + H2O + 4 H(+)(in) = ADP + phosphate + 5 H(+)(out). Produces ATP from ADP in the presence of a proton gradient across the membrane. The catalytic sites are hosted primarily by the beta subunits. This chain is ATP synthase subunit beta, found in Rhodopseudomonas palustris (strain ATCC BAA-98 / CGA009).